Consider the following 171-residue polypeptide: 3-hydroxydecanoyl-[acyl-carrier-protein] dehydratase (171 aa).

His-70 is a catalytic residue.

This sequence belongs to the thioester dehydratase family. FabA subfamily. Homodimer.

Its subcellular location is the cytoplasm. It carries out the reaction a (3R)-hydroxyacyl-[ACP] = a (2E)-enoyl-[ACP] + H2O. It catalyses the reaction (3R)-hydroxydecanoyl-[ACP] = (2E)-decenoyl-[ACP] + H2O. The enzyme catalyses (2E)-decenoyl-[ACP] = (3Z)-decenoyl-[ACP]. It participates in lipid metabolism; fatty acid biosynthesis. In terms of biological role, necessary for the introduction of cis unsaturation into fatty acids. Catalyzes the dehydration of (3R)-3-hydroxydecanoyl-ACP to E-(2)-decenoyl-ACP and then its isomerization to Z-(3)-decenoyl-ACP. Can catalyze the dehydratase reaction for beta-hydroxyacyl-ACPs with saturated chain lengths up to 16:0, being most active on intermediate chain length. The sequence is that of 3-hydroxydecanoyl-[acyl-carrier-protein] dehydratase from Pseudomonas fluorescens (strain SBW25).